We begin with the raw amino-acid sequence, 136 residues long: Small ribosomal subunit protein uS9 (136 aa).

Positions 97 to 136 (SPDNRKPLKTEGHLSRDPRAKERRKYGLKKARKAPQFSKR) are disordered. Residues 98–116 (PDNRKPLKTEGHLSRDPRA) show a composition bias toward basic and acidic residues. Positions 117 to 136 (KERRKYGLKKARKAPQFSKR) are enriched in basic residues.

This sequence belongs to the universal ribosomal protein uS9 family.

This is Small ribosomal subunit protein uS9 from Prochlorococcus marinus (strain MIT 9301).